Consider the following 125-residue polypeptide: Fluoride-specific ion channel FluC (125 aa).

4 helical membrane passes run 9-29, 32-52, 67-87, and 99-119; these read LFCA…YGLL, AFPY…GLIM, IGLT…SYET, and AFTN…LGII. Residues Gly-75 and Thr-78 each contribute to the Na(+) site.

It belongs to the fluoride channel Fluc/FEX (TC 1.A.43) family.

The protein resides in the cell inner membrane. The catalysed reaction is fluoride(in) = fluoride(out). Na(+) is not transported, but it plays an essential structural role and its presence is essential for fluoride channel function. Functionally, fluoride-specific ion channel. Important for reducing fluoride concentration in the cell, thus reducing its toxicity. The protein is Fluoride-specific ion channel FluC of Trichlorobacter lovleyi (strain ATCC BAA-1151 / DSM 17278 / SZ) (Geobacter lovleyi).